The chain runs to 318 residues: Acetaldehyde dehydrogenase 2 (318 aa).

9 to 12 (SGNI) is a binding site for NAD(+). Cysteine 129 (acyl-thioester intermediate) is an active-site residue. Residues 160-168 (SAGPGTRAN) and asparagine 288 each bind NAD(+).

The protein belongs to the acetaldehyde dehydrogenase family.

The enzyme catalyses acetaldehyde + NAD(+) + CoA = acetyl-CoA + NADH + H(+). This Mycolicibacterium vanbaalenii (strain DSM 7251 / JCM 13017 / BCRC 16820 / KCTC 9966 / NRRL B-24157 / PYR-1) (Mycobacterium vanbaalenii) protein is Acetaldehyde dehydrogenase 2.